A 1595-amino-acid polypeptide reads, in one-letter code: Pentafunctional AROM polypeptide (1595 aa).

Residues 1-384 (MGVPTKISIL…HEPRASTVSN (384 aa)) form a 3-dehydroquinate synthase region. NAD(+)-binding positions include 44 to 46 (DTN), 81 to 84 (ESSK), 114 to 116 (GGV), and D119. 7-phospho-2-dehydro-3-deoxy-D-arabino-heptonate is bound at residue R130. 139–140 (TT) is a binding site for NAD(+). 2 residues coordinate 7-phospho-2-dehydro-3-deoxy-D-arabino-heptonate: D146 and K152. K161 is an NAD(+) binding site. Residue N162 participates in 7-phospho-2-dehydro-3-deoxy-D-arabino-heptonate binding. NAD(+)-binding positions include 179-182 (FLNT) and N190. Residue E194 coordinates Zn(2+). Residues 194 to 197 (EVIK) and K250 contribute to the 7-phospho-2-dehydro-3-deoxy-D-arabino-heptonate site. E260 (proton acceptor; for 3-dehydroquinate synthase activity) is an active-site residue. 7-phospho-2-dehydro-3-deoxy-D-arabino-heptonate is bound by residues 264–268 (RNLLN) and H271. H271 is a binding site for Zn(2+). Catalysis depends on H275, which acts as the Proton acceptor; for 3-dehydroquinate synthase activity. Residues H287 and K356 each coordinate 7-phospho-2-dehydro-3-deoxy-D-arabino-heptonate. A Zn(2+)-binding site is contributed by H287. The EPSP synthase stretch occupies residues 397–842 (VSPGVPKGLD…WDSLAQTFKV (446 aa)). C824 serves as the catalytic For EPSP synthase activity. The shikimate kinase stretch occupies residues 866 to 1057 (ASIFIIGMRG…RRKENTFFVS (192 aa)). An ATP-binding site is contributed by 872–879 (GMRGAGKT). The 3-dehydroquinase stretch occupies residues 1058–1278 (LTLPDLSLAA…AAPGQLSARE (221 aa)). Catalysis depends on H1181, which acts as the Proton acceptor; for 3-dehydroquinate dehydratase activity. The Schiff-base intermediate with substrate; for 3-dehydroquinate dehydratase activity role is filled by K1209. Positions 1291 to 1595 (AKKFAVIGNP…MGVSPSEDIL (305 aa)) are shikimate dehydrogenase.

In the N-terminal section; belongs to the sugar phosphate cyclases superfamily. Dehydroquinate synthase family. This sequence in the 2nd section; belongs to the EPSP synthase family. The protein in the 3rd section; belongs to the shikimate kinase family. It in the 4th section; belongs to the type-I 3-dehydroquinase family. In the C-terminal section; belongs to the shikimate dehydrogenase family. As to quaternary structure, homodimer. The cofactor is Zn(2+).

Its subcellular location is the cytoplasm. It catalyses the reaction 7-phospho-2-dehydro-3-deoxy-D-arabino-heptonate = 3-dehydroquinate + phosphate. The enzyme catalyses 3-dehydroquinate = 3-dehydroshikimate + H2O. The catalysed reaction is shikimate + NADP(+) = 3-dehydroshikimate + NADPH + H(+). It carries out the reaction shikimate + ATP = 3-phosphoshikimate + ADP + H(+). It catalyses the reaction 3-phosphoshikimate + phosphoenolpyruvate = 5-O-(1-carboxyvinyl)-3-phosphoshikimate + phosphate. The protein operates within metabolic intermediate biosynthesis; chorismate biosynthesis; chorismate from D-erythrose 4-phosphate and phosphoenolpyruvate: step 2/7. Its pathway is metabolic intermediate biosynthesis; chorismate biosynthesis; chorismate from D-erythrose 4-phosphate and phosphoenolpyruvate: step 3/7. It participates in metabolic intermediate biosynthesis; chorismate biosynthesis; chorismate from D-erythrose 4-phosphate and phosphoenolpyruvate: step 4/7. It functions in the pathway metabolic intermediate biosynthesis; chorismate biosynthesis; chorismate from D-erythrose 4-phosphate and phosphoenolpyruvate: step 5/7. The protein operates within metabolic intermediate biosynthesis; chorismate biosynthesis; chorismate from D-erythrose 4-phosphate and phosphoenolpyruvate: step 6/7. In terms of biological role, the AROM polypeptide catalyzes 5 consecutive enzymatic reactions in prechorismate polyaromatic amino acid biosynthesis. The polypeptide is Pentafunctional AROM polypeptide (Ajellomyces capsulatus (strain G186AR / H82 / ATCC MYA-2454 / RMSCC 2432) (Darling's disease fungus)).